Reading from the N-terminus, the 617-residue chain is MKQSKMPIPTLREMPSDAQVISHALMLRAGYVRQVSAGVYSYLPLANRVIEKAKNIMRQEFEKIGAVEMLAPALLSAELWRESGRYETYGEDLYKLKNREKSDFILGPTHEETFTAIVRDSVKSYKQLPLNLYQIQPKYRDEKRPRNGLLRTREFIMKDAYSFHANYDSLDSVYDEYKAAYERIFTRSGLDFKAIIGDGGAMGGKDSQEFMAITSARTDLDRWVVLDKSVASFDEIPAEVQEEIKAELLKWIVSGEDTIAYSSESSYAANLEMATNEYKPSNRVVAEEEVTRVATPDVKSIDEVAAFLNVPEEQTIKTLFYIADGELVAALLVGNDQLNEVKLKNHLGADFFDVASEEEVANVVQAGFGSLGPVGLPENIKIIADRKVQDVRNAVVGANEDGYHLTGVNPGRDFTAEYVDIREVREGEISPDGQGVLNFARGIEIGHIFKLGTRYSASMGADVLDENGRAVPIIMGCYGIGVSRLLSAVMEQHARLFVNKTPKGEYRYAWGINFPKELAPFDVHLITVNVKDEEAQALTEKLEASLMGAGYEVLTDDRNERVGVKFSDSDLIGLPIRITVGKKAADGIVEVKIKATGDTIEVHADNVLETLEILSKK.

It belongs to the class-II aminoacyl-tRNA synthetase family. ProS type 1 subfamily. Homodimer.

The protein localises to the cytoplasm. The catalysed reaction is tRNA(Pro) + L-proline + ATP = L-prolyl-tRNA(Pro) + AMP + diphosphate. Catalyzes the attachment of proline to tRNA(Pro) in a two-step reaction: proline is first activated by ATP to form Pro-AMP and then transferred to the acceptor end of tRNA(Pro). As ProRS can inadvertently accommodate and process non-cognate amino acids such as alanine and cysteine, to avoid such errors it has two additional distinct editing activities against alanine. One activity is designated as 'pretransfer' editing and involves the tRNA(Pro)-independent hydrolysis of activated Ala-AMP. The other activity is designated 'posttransfer' editing and involves deacylation of mischarged Ala-tRNA(Pro). The misacylated Cys-tRNA(Pro) is not edited by ProRS. The chain is Proline--tRNA ligase from Streptococcus pneumoniae (strain Hungary19A-6).